Here is a 136-residue protein sequence, read N- to C-terminus: Large ribosomal subunit protein uL16c (136 aa).

The protein belongs to the universal ribosomal protein uL16 family. In terms of assembly, part of the 50S ribosomal subunit.

It localises to the plastid. It is found in the chloroplast. This Oryza sativa (Rice) protein is Large ribosomal subunit protein uL16c.